Here is a 535-residue protein sequence, read N- to C-terminus: Glutamate--cysteine ligase (535 aa).

This sequence belongs to the glutamate--cysteine ligase type 1 family. Type 1 subfamily.

It catalyses the reaction L-cysteine + L-glutamate + ATP = gamma-L-glutamyl-L-cysteine + ADP + phosphate + H(+). The protein operates within sulfur metabolism; glutathione biosynthesis; glutathione from L-cysteine and L-glutamate: step 1/2. The polypeptide is Glutamate--cysteine ligase (Pseudomonas syringae pv. syringae).